The chain runs to 250 residues: PHD finger protein ALFIN-LIKE 3 (250 aa).

Met1 carries the N-acetylmethionine modification. The interval 146–192 (DKSSAANQNGNKSKSNSKVRTSEGKSSKTKQPKEEDEEIDEDDEDDH) is disordered. The span at 149–163 (SAANQNGNKSKSNSK) shows a compositional bias: low complexity. Residues 179-192 (EEDEEIDEDDEDDH) are compositionally biased toward acidic residues. The PHD-type zinc finger occupies 194–246 (ETLCGACGDSDGADEFWICCDLCEKWFHGKCVKITPARAEHIKQYKCPSCSNK).

Belongs to the Alfin family. Ubiquitously expressed.

It localises to the nucleus. Functionally, histone-binding component that specifically recognizes H3 tails trimethylated on 'Lys-4' (H3K4me3), which mark transcription start sites of virtually all active genes. The protein is PHD finger protein ALFIN-LIKE 3 (AL3) of Arabidopsis thaliana (Mouse-ear cress).